The sequence spans 227 residues: 2,3-bisphosphoglycerate-dependent phosphoglycerate mutase (227 aa).

Substrate contacts are provided by residues 7–14 (RHGFSEWN), 20–21 (TG), R59, 86–89 (ERHY), K97, 113–114 (RR), and 182–183 (GN). H8 acts as the Tele-phosphohistidine intermediate in catalysis. E86 serves as the catalytic Proton donor/acceptor.

It belongs to the phosphoglycerate mutase family. BPG-dependent PGAM subfamily. As to quaternary structure, homodimer.

The catalysed reaction is (2R)-2-phosphoglycerate = (2R)-3-phosphoglycerate. Its pathway is carbohydrate degradation; glycolysis; pyruvate from D-glyceraldehyde 3-phosphate: step 3/5. Functionally, catalyzes the interconversion of 2-phosphoglycerate and 3-phosphoglycerate. The protein is 2,3-bisphosphoglycerate-dependent phosphoglycerate mutase of Pasteurella multocida (strain Pm70).